The chain runs to 182 residues: MKSFLLVVNALALTLPFLAVEVQNQKQPACHENDERPFYQKTAPYVPMYYVPNSYPYYGTNLYQRRPAIAINNPYVPRTYYANPAVVRPHAQIPQRQYLPNSHPPTVVRRPNLHPSFIAIPPKKIQDKIIIPTINTIATVEPTPAPATEPTVDSVVTPEAFSESIITSTPETTTVAVTPPTA.

The N-terminal stretch at 1-20 is a signal peptide; the sequence is MKSFLLVVNALALTLPFLAV. Residues T133, T143, T148, and T151 are each glycosylated (O-linked (GalNAc...) threonine). T157 carries the post-translational modification Phosphothreonine; alternate. T157 carries O-linked (GalNAc...) threonine; alternate glycosylation. 3 O-linked (GalNAc...) threonine glycosylation sites follow: T167, T169, and T178.

It belongs to the kappa-casein family. Heteromultimers composed of alpha-s1 casein and kappa casein linked by disulfide bonds. Post-translationally, the N-terminus is blocked. As to expression, mammary gland specific. Secreted in milk.

The protein resides in the secreted. Kappa-casein stabilizes micelle formation, preventing casein precipitation in milk. The protein is Kappa-casein (CSN3) of Homo sapiens (Human).